The sequence spans 83 residues: Small ribosomal subunit protein bS18 (83 aa).

This sequence belongs to the bacterial ribosomal protein bS18 family. As to quaternary structure, part of the 30S ribosomal subunit. Forms a tight heterodimer with protein bS6.

Its function is as follows. Binds as a heterodimer with protein bS6 to the central domain of the 16S rRNA, where it helps stabilize the platform of the 30S subunit. The sequence is that of Small ribosomal subunit protein bS18 from Tropheryma whipplei (strain TW08/27) (Whipple's bacillus).